We begin with the raw amino-acid sequence, 71 residues long: Small ribosomal subunit protein bS21 (71 aa).

It belongs to the bacterial ribosomal protein bS21 family.

In Psychromonas ingrahamii (strain DSM 17664 / CCUG 51855 / 37), this protein is Small ribosomal subunit protein bS21.